A 117-amino-acid chain; its full sequence is Putative membrane protein insertion efficiency factor (117 aa).

This sequence belongs to the UPF0161 family.

The protein localises to the cell inner membrane. In terms of biological role, could be involved in insertion of integral membrane proteins into the membrane. This is Putative membrane protein insertion efficiency factor from Bartonella quintana (strain Toulouse) (Rochalimaea quintana).